The primary structure comprises 188 residues: MGANEDQEMELEALRSIYEGDESFRELSPVSFQYRIGEDGDPKAFLIEISWTETYPQTPPVISMNAFFNNTISSAVKQSILAKLQEAVEVNLGTAMTYTLFEYAKDNKEQFMENHHPGSSTTPIANIISVETPSAAPSSKKKDKKEQLSKAQKRKLADKTDHKGELPRGWNWVDVVKHLSKSGSKDDE.

One can recognise an RWD domain in the interval 9 to 111 (MELEALRSIY…EYAKDNKEQF (103 aa)). Residues 132 to 167 (TPSAAPSSKKKDKKEQLSKAQKRKLADKTDHKGELP) form a disordered region. Residues 155 to 166 (KLADKTDHKGEL) show a composition bias toward basic and acidic residues.

In Rattus norvegicus (Rat), this protein is RWD domain-containing protein 4 (Rwdd4).